The following is a 275-amino-acid chain: Interleukin-2 receptor subunit alpha (275 aa).

Positions 1-21 (MEPSLLLWGILTFVVVHGHVT) are cleaved as a signal peptide. Positions 22 to 84 (ELCDENPPDI…SWENQCRCIS (63 aa)) constitute a Sushi 1 domain. The Extracellular segment spans residues 22 to 243 (ELCDENPPDI…ESFVFTTEYQ (222 aa)). Intrachain disulfides connect Cys24/Cys67, Cys49/Cys80, and Cys51/Cys82. Asn60 and Asn70 each carry an N-linked (GlcNAc...) asparagine glycan. Residues 91–118 (DGQIIPKPEEQKGKSPMGMQSQMQPTDQ) are disordered. The segment covering 108–118 (GMQSQMQPTDQ) has biased composition (polar residues). Residues 123–186 (GHCREPPPWE…WTQPRLQCLS (64 aa)) enclose the Sushi 2 domain. 2 cysteine pairs are disulfide-bonded: Cys125–Cys168 and Cys152–Cys184. The disordered stretch occupies residues 188–213 (RSDGWFPDDEEPQASTDAALGSDTSC). A helical transmembrane segment spans residues 244–262 (IAVAGCVLLLISIVLLSGL). Over 263–275 (TWQRRWRKSRRTI) the chain is Cytoplasmic.

Non-covalent dimer of an alpha and a beta subunit. IL2R exists in 3 different forms: a high affinity dimer, an intermediate affinity monomer (beta subunit), and a low affinity monomer (alpha subunit). The high and intermediate affinity forms also associate with a gamma subunit.

The protein localises to the membrane. Functionally, receptor for interleukin-2. The receptor is involved in the regulation of immune tolerance by controlling regulatory T cells (TREGs) activity. TREGs suppress the activation and expansion of autoreactive T-cells. This chain is Interleukin-2 receptor subunit alpha (IL2RA), found in Felis catus (Cat).